We begin with the raw amino-acid sequence, 1007 residues long: A disintegrin and metalloproteinase with thrombospondin motifs 1 (1007 aa).

The signal sequence occupies residues 1-20; it reads MPCCLWAALSLLLAVVGAGA. N130 and N228 each carry an N-linked (GlcNAc...) asparagine glycan. One can recognise a Peptidase M12B domain in the interval 184-370; it reads LWLELAIVAD…WSSCSKEQFH (187 aa). H322 is a binding site for Zn(2+). A Metal-binding motif is present at residues 322–333; sequence HELAHLLGLTHD. E323 is an active-site residue. Residues H326 and H332 each coordinate Zn(2+). Disulfide bonds link C338-C364, C494-C530, C498-C536, and C509-C520. The region spanning 482 to 537 is the TSP type-1 1 domain; it reads TPEWGDWEEWSACNADCGYGLRTRTRKCKYRGFVSESACEGAGSQVATCWAGSSCA. Residues N561, N610, N626, N737, N777, and N865 are each glycosylated (N-linked (GlcNAc...) asparagine). TSP type-1 domains are found at residues 833–899 and 900–952; these read CEFV…NRIP and CPVY…RRCP. 3 cysteine pairs are disulfide-bonded: C912/C946, C916/C951, and C927/C935.

It depends on Zn(2+) as a cofactor.

The protein localises to the secreted. Its subcellular location is the extracellular space. It localises to the extracellular matrix. Functionally, involved in larval molting and metamorphosis. May degrade extracellular matrix (ECM) and basement membrane (BM) during the development of organs to allow degeneration and remodeling of tissues. The sequence is that of A disintegrin and metalloproteinase with thrombospondin motifs 1 from Bombyx mori (Silk moth).